The sequence spans 942 residues: Isoleucine--tRNA ligase (942 aa).

Positions 58-68 (PYANGDIHIGH) match the 'HIGH' region motif. Glu-566 is an L-isoleucyl-5'-AMP binding site. The 'KMSKS' region signature appears at 607 to 611 (KMSKS). Lys-610 contributes to the ATP binding site. 4 residues coordinate Zn(2+): Cys-905, Cys-908, Cys-925, and Cys-928.

Belongs to the class-I aminoacyl-tRNA synthetase family. IleS type 1 subfamily. In terms of assembly, monomer. Zn(2+) is required as a cofactor.

It is found in the cytoplasm. It carries out the reaction tRNA(Ile) + L-isoleucine + ATP = L-isoleucyl-tRNA(Ile) + AMP + diphosphate. Its function is as follows. Catalyzes the attachment of isoleucine to tRNA(Ile). As IleRS can inadvertently accommodate and process structurally similar amino acids such as valine, to avoid such errors it has two additional distinct tRNA(Ile)-dependent editing activities. One activity is designated as 'pretransfer' editing and involves the hydrolysis of activated Val-AMP. The other activity is designated 'posttransfer' editing and involves deacylation of mischarged Val-tRNA(Ile). The protein is Isoleucine--tRNA ligase of Vibrio parahaemolyticus serotype O3:K6 (strain RIMD 2210633).